The chain runs to 335 residues: DNA-directed RNA polymerase subunit alpha (335 aa).

Residues 1-248 (MTIQTSRTLS…GLFAPLQEVS (248 aa)) are alpha N-terminal domain (alpha-NTD). The tract at residues 256-335 (KPDEDNQKNQ…LPRTREKGKA (80 aa)) is alpha C-terminal domain (alpha-CTD).

This sequence belongs to the RNA polymerase alpha chain family. In terms of assembly, in cyanobacteria the RNAP catalytic core is composed of 2 alpha, 1 beta, 1 beta', 1 gamma and 1 omega subunit. When a sigma factor is associated with the core the holoenzyme is formed, which can initiate transcription.

The catalysed reaction is RNA(n) + a ribonucleoside 5'-triphosphate = RNA(n+1) + diphosphate. Functionally, DNA-dependent RNA polymerase catalyzes the transcription of DNA into RNA using the four ribonucleoside triphosphates as substrates. In Synechococcus sp. (strain JA-2-3B'a(2-13)) (Cyanobacteria bacterium Yellowstone B-Prime), this protein is DNA-directed RNA polymerase subunit alpha.